We begin with the raw amino-acid sequence, 31 residues long: Mycofactocin precursor peptide (31 aa).

This sequence belongs to the mycofactocin precursor peptide family. The post-translational modifications that lead to mycofactocin involve oxidative decarboxylation of the C-terminal tyrosine residue catalyzed by MftC, introduction of a tyramine-valine cross-link, removal of the modified C-terminal dipeptide by MftE. The released dipeptide then undergoes oxidative deamination by MftD, glycosylation by MftF and methylation by an unknown enzyme.

Precursor peptide that leads to mycofactocin (MFT) after extensive post-translational modifications by enzymes encoded by adjacent genes. Mycofactocin acts as a redox cofactor of nicotinamide-dependent oxidoreductases encoded in the same locus. Is required for the in vivo ethanol assimilation in M.smegmatis. This chain is Mycofactocin precursor peptide, found in Mycolicibacterium smegmatis (strain ATCC 700084 / mc(2)155) (Mycobacterium smegmatis).